The sequence spans 152 residues: MSTINTDTNEAMPHISVNAQYIKDLSLENPSAPSSLAALEQRPQIDLSLDINITNLSEENFYEVELNIEATARNEKYKLFQIELKYAGVFNLINIDSEQHPILLSVHCPAMIFPFARKIIASCTQDAGFQPLMIDPIDFGALYHKKMSEHQN.

The protein belongs to the SecB family. As to quaternary structure, homotetramer, a dimer of dimers. One homotetramer interacts with 1 SecA dimer.

The protein resides in the cytoplasm. In terms of biological role, one of the proteins required for the normal export of preproteins out of the cell cytoplasm. It is a molecular chaperone that binds to a subset of precursor proteins, maintaining them in a translocation-competent state. It also specifically binds to its receptor SecA. In Rickettsia felis (strain ATCC VR-1525 / URRWXCal2) (Rickettsia azadi), this protein is Protein-export protein SecB.